We begin with the raw amino-acid sequence, 817 residues long: DNA mismatch repair protein MutS (817 aa).

Residue Gly604–Ser611 coordinates ATP.

Belongs to the DNA mismatch repair MutS family.

Functionally, this protein is involved in the repair of mismatches in DNA. It is possible that it carries out the mismatch recognition step. This protein has a weak ATPase activity. The polypeptide is DNA mismatch repair protein MutS (Petrotoga mobilis (strain DSM 10674 / SJ95)).